A 330-amino-acid chain; its full sequence is Ketol-acid reductoisomerase (NADP(+)) (330 aa).

The region spanning 1–181 (MNVYYEQDAD…GGTKAGVIET (181 aa)) is the KARI N-terminal Rossmann domain. NADP(+)-binding positions include 24–27 (YGSQ), Arg-47, Ser-50, Ser-52, and 82–85 (DQNQ). His-107 is a catalytic residue. Residue Gly-133 participates in NADP(+) binding. In terms of domain architecture, KARI C-terminal knotted spans 182–327 (SIKNETETDL…AKLRDMMSWL (146 aa)). Positions 190, 194, 226, and 230 each coordinate Mg(2+). Substrate is bound at residue Ser-251.

Belongs to the ketol-acid reductoisomerase family. Mg(2+) is required as a cofactor.

The catalysed reaction is (2R)-2,3-dihydroxy-3-methylbutanoate + NADP(+) = (2S)-2-acetolactate + NADPH + H(+). The enzyme catalyses (2R,3R)-2,3-dihydroxy-3-methylpentanoate + NADP(+) = (S)-2-ethyl-2-hydroxy-3-oxobutanoate + NADPH + H(+). Its pathway is amino-acid biosynthesis; L-isoleucine biosynthesis; L-isoleucine from 2-oxobutanoate: step 2/4. The protein operates within amino-acid biosynthesis; L-valine biosynthesis; L-valine from pyruvate: step 2/4. Involved in the biosynthesis of branched-chain amino acids (BCAA). Catalyzes an alkyl-migration followed by a ketol-acid reduction of (S)-2-acetolactate (S2AL) to yield (R)-2,3-dihydroxy-isovalerate. In the isomerase reaction, S2AL is rearranged via a Mg-dependent methyl migration to produce 3-hydroxy-3-methyl-2-ketobutyrate (HMKB). In the reductase reaction, this 2-ketoacid undergoes a metal-dependent reduction by NADPH to yield (R)-2,3-dihydroxy-isovalerate. The sequence is that of Ketol-acid reductoisomerase (NADP(+)) from Pelodictyon phaeoclathratiforme (strain DSM 5477 / BU-1).